The sequence spans 747 residues: Polyribonucleotide nucleotidyltransferase (747 aa).

The Mg(2+) site is built by aspartate 493 and aspartate 499. Positions 560–619 (PRIITLQINPEKIGALIGPGGKTVRGITEATGAQIDIEEDGRVYISTPDAAAAQQAVAMV) constitute a KH domain. Positions 629-698 (GDIFLGKVVR…GTGKVSLSRR (70 aa)) constitute an S1 motif domain. The segment at 705 to 747 (TAEDRRAAGAGRGLRDGGGRSGGSDRGGDRGPRGDDRQRPRRR) is disordered. Composition is skewed to basic and acidic residues over residues 706-722 (AEDR…RDGG) and 730-747 (RGGD…PRRR).

The protein belongs to the polyribonucleotide nucleotidyltransferase family. It depends on Mg(2+) as a cofactor.

It is found in the cytoplasm. It catalyses the reaction RNA(n+1) + phosphate = RNA(n) + a ribonucleoside 5'-diphosphate. Involved in mRNA degradation. Catalyzes the phosphorolysis of single-stranded polyribonucleotides processively in the 3'- to 5'-direction. The protein is Polyribonucleotide nucleotidyltransferase of Roseiflexus sp. (strain RS-1).